We begin with the raw amino-acid sequence, 488 residues long: UDP-N-acetylmuramoyl-L-alanyl-D-glutamate--2,6-diaminopimelate ligase (488 aa).

Residues Leu24, Ser26, and 41–43 (HQV) contribute to the UDP-N-acetyl-alpha-D-muramoyl-L-alanyl-D-glutamate site. Position 113 to 119 (113 to 119 (GTNGKTT)) interacts with ATP. UDP-N-acetyl-alpha-D-muramoyl-L-alanyl-D-glutamate contacts are provided by residues Asn154, 155-156 (TT), Ser182, Gln188, and Arg190. An N6-carboxylysine modification is found at Lys222. Residues Arg386, 410–413 (DNPR), Gly461, and Glu465 contribute to the meso-2,6-diaminopimelate site. The Meso-diaminopimelate recognition motif motif lies at 410 to 413 (DNPR).

Belongs to the MurCDEF family. MurE subfamily. It depends on Mg(2+) as a cofactor. Post-translationally, carboxylation is probably crucial for Mg(2+) binding and, consequently, for the gamma-phosphate positioning of ATP.

Its subcellular location is the cytoplasm. The enzyme catalyses UDP-N-acetyl-alpha-D-muramoyl-L-alanyl-D-glutamate + meso-2,6-diaminopimelate + ATP = UDP-N-acetyl-alpha-D-muramoyl-L-alanyl-gamma-D-glutamyl-meso-2,6-diaminopimelate + ADP + phosphate + H(+). It participates in cell wall biogenesis; peptidoglycan biosynthesis. Functionally, catalyzes the addition of meso-diaminopimelic acid to the nucleotide precursor UDP-N-acetylmuramoyl-L-alanyl-D-glutamate (UMAG) in the biosynthesis of bacterial cell-wall peptidoglycan. The polypeptide is UDP-N-acetylmuramoyl-L-alanyl-D-glutamate--2,6-diaminopimelate ligase (Haemophilus influenzae (strain 86-028NP)).